The primary structure comprises 181 residues: ATP synthase subunit delta (181 aa).

It belongs to the ATPase delta chain family. F-type ATPases have 2 components, F(1) - the catalytic core - and F(0) - the membrane proton channel. F(1) has five subunits: alpha(3), beta(3), gamma(1), delta(1), epsilon(1). F(0) has three main subunits: a(1), b(2) and c(10-14). The alpha and beta chains form an alternating ring which encloses part of the gamma chain. F(1) is attached to F(0) by a central stalk formed by the gamma and epsilon chains, while a peripheral stalk is formed by the delta and b chains.

It localises to the cell membrane. Functionally, f(1)F(0) ATP synthase produces ATP from ADP in the presence of a proton or sodium gradient. F-type ATPases consist of two structural domains, F(1) containing the extramembraneous catalytic core and F(0) containing the membrane proton channel, linked together by a central stalk and a peripheral stalk. During catalysis, ATP synthesis in the catalytic domain of F(1) is coupled via a rotary mechanism of the central stalk subunits to proton translocation. Its function is as follows. This protein is part of the stalk that links CF(0) to CF(1). It either transmits conformational changes from CF(0) to CF(1) or is implicated in proton conduction. The sequence is that of ATP synthase subunit delta from Mycoplasma capricolum subsp. capricolum (strain California kid / ATCC 27343 / NCTC 10154).